Reading from the N-terminus, the 597-residue chain is NADH-quinone oxidoreductase subunit C/D (597 aa).

The segment at 1-188 (MKKEIKRDDV…DPYVLNKYKE (188 aa)) is NADH dehydrogenase I subunit C. The NADH dehydrogenase I subunit D stretch occupies residues 211–597 (KYMFLNLGPN…IDFVMSDVDR (387 aa)).

This sequence in the N-terminal section; belongs to the complex I 30 kDa subunit family. In the C-terminal section; belongs to the complex I 49 kDa subunit family. In terms of assembly, NDH-1 is composed of 13 different subunits. Subunits NuoB, CD, E, F, and G constitute the peripheral sector of the complex.

The protein resides in the cell inner membrane. The enzyme catalyses a quinone + NADH + 5 H(+)(in) = a quinol + NAD(+) + 4 H(+)(out). In terms of biological role, NDH-1 shuttles electrons from NADH, via FMN and iron-sulfur (Fe-S) centers, to quinones in the respiratory chain. The immediate electron acceptor for the enzyme in this species is believed to be ubiquinone. Couples the redox reaction to proton translocation (for every two electrons transferred, four hydrogen ions are translocated across the cytoplasmic membrane), and thus conserves the redox energy in a proton gradient. This Buchnera aphidicola subsp. Baizongia pistaciae (strain Bp) protein is NADH-quinone oxidoreductase subunit C/D.